The chain runs to 740 residues: ABC transporter G family member 1 (740 aa).

One can recognise an ABC transporter domain in the interval 82–334; sequence LDFRNLFPRR…FTEFGSPIPE (253 aa). Residue 127-134 coordinates ATP; sequence GASGSGKS. The region spanning 434–644 is the ABC transmembrane type-2 domain; it reads IEIKTLSKRS…PYEAVLQNEF (211 aa). The next 6 membrane-spanning stretches (helical) occupy residues 453–473, 488–508, 529–549, 563–585, 594–614, and 713–733; these read LFGI…TVFW, FFAF…PVFL, VLSH…AFAA, GLLF…VTFL, LGYT…GFFI, and LFIT…TLLL.

Belongs to the ABC transporter superfamily. ABCG family. Eye pigment precursor importer (TC 3.A.1.204) subfamily.

It localises to the membrane. The sequence is that of ABC transporter G family member 1 (ABCG1) from Arabidopsis thaliana (Mouse-ear cress).